A 61-amino-acid polypeptide reads, in one-letter code: Temporin-SN2 (61 aa).

The first 22 residues, 1-22 (MFTLKKTLLLLFFLGTINLSLC), serve as a signal peptide directing secretion. The propeptide at 23–44 (EEERNAEEERRDGDDEMDVEVK) is removed in mature form. Lys61 carries the post-translational modification Lysine amide.

Belongs to the frog skin active peptide (FSAP) family. Temporin subfamily. As to expression, expressed by the skin glands.

It is found in the secreted. In terms of biological role, antimicrobial peptide. Active against some Gram-positive and Gram-negative bacterial strains. Active against fungus C.glabrata 090902 but not against C.albicans ATCC 12231. Shows very weak hemolytic activity against human erythrocytes. In Sylvirana spinulosa (Fine-spined frog), this protein is Temporin-SN2.